A 334-amino-acid chain; its full sequence is Holliday junction branch migration complex subunit RuvB (334 aa).

Residues 4-186 (ADRLIAPENP…FGITQRLEYY (183 aa)) are large ATPase domain (RuvB-L). ATP is bound by residues isoleucine 25, arginine 26, glycine 67, lysine 70, threonine 71, threonine 72, 133–135 (EDY), arginine 176, tyrosine 186, and arginine 223. A Mg(2+)-binding site is contributed by threonine 71. A small ATPAse domain (RuvB-S) region spans residues 187–257 (KVQDLQNIVQ…VADKALNMLD (71 aa)). The interval 260–334 (AQGFDYMDRK…RAYLHFGIEK (75 aa)) is head domain (RuvB-H). Residues arginine 315 and arginine 320 each contribute to the DNA site.

Belongs to the RuvB family. Homohexamer. Forms an RuvA(8)-RuvB(12)-Holliday junction (HJ) complex. HJ DNA is sandwiched between 2 RuvA tetramers; dsDNA enters through RuvA and exits via RuvB. An RuvB hexamer assembles on each DNA strand where it exits the tetramer. Each RuvB hexamer is contacted by two RuvA subunits (via domain III) on 2 adjacent RuvB subunits; this complex drives branch migration. In the full resolvosome a probable DNA-RuvA(4)-RuvB(12)-RuvC(2) complex forms which resolves the HJ.

It is found in the cytoplasm. The catalysed reaction is ATP + H2O = ADP + phosphate + H(+). Functionally, the RuvA-RuvB-RuvC complex processes Holliday junction (HJ) DNA during genetic recombination and DNA repair, while the RuvA-RuvB complex plays an important role in the rescue of blocked DNA replication forks via replication fork reversal (RFR). RuvA specifically binds to HJ cruciform DNA, conferring on it an open structure. The RuvB hexamer acts as an ATP-dependent pump, pulling dsDNA into and through the RuvAB complex. RuvB forms 2 homohexamers on either side of HJ DNA bound by 1 or 2 RuvA tetramers; 4 subunits per hexamer contact DNA at a time. Coordinated motions by a converter formed by DNA-disengaged RuvB subunits stimulates ATP hydrolysis and nucleotide exchange. Immobilization of the converter enables RuvB to convert the ATP-contained energy into a lever motion, pulling 2 nucleotides of DNA out of the RuvA tetramer per ATP hydrolyzed, thus driving DNA branch migration. The RuvB motors rotate together with the DNA substrate, which together with the progressing nucleotide cycle form the mechanistic basis for DNA recombination by continuous HJ branch migration. Branch migration allows RuvC to scan DNA until it finds its consensus sequence, where it cleaves and resolves cruciform DNA. This Vibrio parahaemolyticus serotype O3:K6 (strain RIMD 2210633) protein is Holliday junction branch migration complex subunit RuvB.